Here is a 424-residue protein sequence, read N- to C-terminus: UDP-sugar transporter protein SLC35A5 (424 aa).

At 1 to 8 (MEKQCCSH) the chain is on the cytoplasmic side. A helical membrane pass occupies residues 9-29 (PVICSLSTMYTFLLGAIFIAL). The Lumenal segment spans residues 30 to 53 (SSSRILLVKYSANEENKYDYLPTT). A helical transmembrane segment spans residues 54–74 (ANVCSELVKLVFCVLVSFCVI). Residues 75-93 (KKDHQSRNLKYASWKEFSN) are Cytoplasmic-facing. Residues 94 to 116 (FMKWSIPAFLYFLDNLIVFYVLS) traverse the membrane as a helical segment. At 117–119 (YLQ) the chain is on the lumenal side. Residues 120-142 (PAMAVIFSNFSIITTALLFRIVL) traverse the membrane as a helical segment. The Cytoplasmic segment spans residues 143–147 (KRRLN). A helical transmembrane segment spans residues 148-168 (WIQWASLLILFLSIVALTAGT). Over 169–228 (KTLQHNLAGHGFHHDAFFSPSNSCLLFRSECPRKDNCTAKEWTFPEAKWNTTARVFSHIR) the chain is Lumenal. Asn204 is a glycosylation site (N-linked (GlcNAc...) asparagine). The chain crosses the membrane as a helical span at residues 229–249 (LGMGHVLIIVQCFISSMANIY). Residues 250-263 (NEKILKEGNQLAES) are Cytoplasmic-facing. Residues 264 to 284 (IFIQNSKLYFFGILFNGLTLG) form a helical membrane-spanning segment. Over 285-303 (LQRSNRDQIKNCGFFYGHN) the chain is Lumenal. Residues 304-324 (AFSVALIFVTAFQGLSVAFIL) traverse the membrane as a helical segment. Residues 325 to 330 (KFLDNM) are Cytoplasmic-facing. The helical transmembrane segment at 331 to 351 (FHVLMAQVTTVIITTVSVLVF) threads the bilayer. Topologically, residues 352–354 (DFR) are lumenal. The helical transmembrane segment at 355–375 (PSLEFFLEAPSVLLSIFIYNA) threads the bilayer. At 376–424 (SKPQGPEYAPRQERIRDLSGNLWERSSGDGEELERLTKPKSDESDEDTF) the chain is on the cytoplasmic side. 3 positions are modified to phosphoserine: Ser394, Ser416, and Ser419. The disordered stretch occupies residues 395-424 (GNLWERSSGDGEELERLTKPKSDESDEDTF). Over residues 408–417 (LERLTKPKSD) the composition is skewed to basic and acidic residues.

The protein belongs to the nucleotide-sugar transporter family. SLC35A subfamily. As to quaternary structure, probably forms homooligomers and heterooligomers with SLC35A1, SLC35A2, SLC35A3 and SLC35A4.

The protein localises to the golgi apparatus membrane. The catalysed reaction is UMP(out) + UDP-alpha-D-glucuronate(in) = UMP(in) + UDP-alpha-D-glucuronate(out). The enzyme catalyses UMP(out) + UDP-N-acetyl-alpha-D-glucosamine(in) = UMP(in) + UDP-N-acetyl-alpha-D-glucosamine(out). It catalyses the reaction UDP-N-acetyl-alpha-D-galactosamine(in) + UMP(out) = UDP-N-acetyl-alpha-D-galactosamine(out) + UMP(in). Probable UDP-sugar:UMP transmembrane antiporter involved in UDP-alpha-D-glucuronate/UDP-GlcA, UDP-GlcNAc/UDP-N-acetyl-alpha-D-glucosamine and UDP-N-acetyl-alpha-D-galactosamine/UDP-GalNAc transport from the cytosol to the lumen of the Golgi. This is UDP-sugar transporter protein SLC35A5 from Pongo abelii (Sumatran orangutan).